The following is a 290-amino-acid chain: Ribosomal RNA small subunit methyltransferase A (290 aa).

Positions 28, 30, 55, 76, 102, and 126 each coordinate S-adenosyl-L-methionine.

Belongs to the class I-like SAM-binding methyltransferase superfamily. rRNA adenine N(6)-methyltransferase family. RsmA subfamily.

The protein localises to the cytoplasm. It catalyses the reaction adenosine(1518)/adenosine(1519) in 16S rRNA + 4 S-adenosyl-L-methionine = N(6)-dimethyladenosine(1518)/N(6)-dimethyladenosine(1519) in 16S rRNA + 4 S-adenosyl-L-homocysteine + 4 H(+). Its function is as follows. Specifically dimethylates two adjacent adenosines (A1518 and A1519) in the loop of a conserved hairpin near the 3'-end of 16S rRNA in the 30S particle. May play a critical role in biogenesis of 30S subunits. This Lachnoclostridium phytofermentans (strain ATCC 700394 / DSM 18823 / ISDg) (Clostridium phytofermentans) protein is Ribosomal RNA small subunit methyltransferase A.